We begin with the raw amino-acid sequence, 195 residues long: Probable GTP-binding protein EngB (195 aa).

The 174-residue stretch at 22-195 (GYPEIALVGR…WKWIEDRMGE (174 aa)) folds into the EngB-type G domain. GTP-binding positions include 30 to 37 (GRSNVGKS), 57 to 61 (GKTQT), 75 to 78 (DVPG), 142 to 145 (TKSD), and 173 to 176 (MFSA). Residues serine 37 and threonine 59 each coordinate Mg(2+).

It belongs to the TRAFAC class TrmE-Era-EngA-EngB-Septin-like GTPase superfamily. EngB GTPase family. It depends on Mg(2+) as a cofactor.

In terms of biological role, necessary for normal cell division and for the maintenance of normal septation. This chain is Probable GTP-binding protein EngB, found in Pediococcus pentosaceus (strain ATCC 25745 / CCUG 21536 / LMG 10740 / 183-1w).